Here is a 380-residue protein sequence, read N- to C-terminus: uncharacterized protein (380 aa).

2 HTH tetR-type domains span residues 3–63 and 201–262; these read ESAE…KEGL and VRTR…CAEI. The H-T-H motif DNA-binding region spans 225–244; the sequence is TISDITRKSNIRRATFYDHY.

This is an uncharacterized protein from Bacillus subtilis (strain 168).